A 76-amino-acid polypeptide reads, in one-letter code: U1-cyrtautoxin-As1b (76 aa).

4 disulfide bridges follow: C23/C37, C30/C51, C36/C66, and C69/C76.

It belongs to the neurotoxin 21 family. Expressed by the venom gland.

The protein resides in the secreted. In terms of biological role, neurotoxin with probable ion channel impairing activity. Is both paralytic and lethal, when injected into lepidopteran larvae. The sequence is that of U1-cyrtautoxin-As1b from Apomastus schlingeri (Trap-door spider).